A 270-amino-acid chain; its full sequence is uncharacterized protein (270 aa).

The tract at residues 166-186 (RRKENNISNESVSEEPESPLF) is disordered.

This is an uncharacterized protein from Ostreid herpesvirus 1 (isolate France) (OsHV-1).